The chain runs to 225 residues: Protein-L-isoaspartate O-methyltransferase (225 aa).

Residue Ser-63 is part of the active site.

Belongs to the methyltransferase superfamily. L-isoaspartyl/D-aspartyl protein methyltransferase family.

Its subcellular location is the cytoplasm. It catalyses the reaction [protein]-L-isoaspartate + S-adenosyl-L-methionine = [protein]-L-isoaspartate alpha-methyl ester + S-adenosyl-L-homocysteine. In terms of biological role, catalyzes the methyl esterification of L-isoaspartyl residues in peptides and proteins that result from spontaneous decomposition of normal L-aspartyl and L-asparaginyl residues. It plays a role in the repair and/or degradation of damaged proteins. The polypeptide is Protein-L-isoaspartate O-methyltransferase (Staphylothermus marinus (strain ATCC 43588 / DSM 3639 / JCM 9404 / F1)).